We begin with the raw amino-acid sequence, 272 residues long: Phosphatidylglycerol--prolipoprotein diacylglyceryl transferase (272 aa).

The next 4 helical transmembrane spans lie at 15-35 (LGPL…LVLF), 53-73 (AFAV…WHVV), 90-110 (IWEG…CFFV), and 117-137 (VPPF…LCFA). A 1,2-diacyl-sn-glycero-3-phospho-(1'-sn-glycerol) is bound at residue Arg-138. Transmembrane regions (helical) follow at residues 174–194 (FHPI…ILLV), 199–219 (VFVK…VLYG), and 237–257 (FGLD…VLIA).

The protein belongs to the Lgt family.

It is found in the cell membrane. The catalysed reaction is L-cysteinyl-[prolipoprotein] + a 1,2-diacyl-sn-glycero-3-phospho-(1'-sn-glycerol) = an S-1,2-diacyl-sn-glyceryl-L-cysteinyl-[prolipoprotein] + sn-glycerol 1-phosphate + H(+). It functions in the pathway protein modification; lipoprotein biosynthesis (diacylglyceryl transfer). In terms of biological role, catalyzes the transfer of the diacylglyceryl group from phosphatidylglycerol to the sulfhydryl group of the N-terminal cysteine of a prolipoprotein, the first step in the formation of mature lipoproteins. The sequence is that of Phosphatidylglycerol--prolipoprotein diacylglyceryl transferase from Tropheryma whipplei (strain Twist) (Whipple's bacillus).